A 612-amino-acid polypeptide reads, in one-letter code: UvrABC system protein C (612 aa).

The 79-residue stretch at 21 to 99 (KLPGVYQMYD…IKSQKPPFNI (79 aa)) folds into the GIY-YIG domain. Residues 209-244 (EVLQQELQVEMEQASQALDFERAVVVRDQITDLRQV) enclose the UVR domain.

This sequence belongs to the UvrC family. In terms of assembly, interacts with UvrB in an incision complex.

It is found in the cytoplasm. Functionally, the UvrABC repair system catalyzes the recognition and processing of DNA lesions. UvrC both incises the 5' and 3' sides of the lesion. The N-terminal half is responsible for the 3' incision and the C-terminal half is responsible for the 5' incision. In Saccharophagus degradans (strain 2-40 / ATCC 43961 / DSM 17024), this protein is UvrABC system protein C.